The primary structure comprises 313 residues: uncharacterized protein (313 aa).

6 consecutive transmembrane segments (helical) span residues 16–36, 106–126, 155–175, 208–228, 233–253, and 286–306; these read AGTWVMIGILGLTMVGFAFLA, FTILTGLFTIIIAAGIVANEF, FGLLLLLILFIGSTLLGLIFF, LSESVSALMVATMAFMLSAVF, LAVGFSIFLLVAGTTATAFIA, and FSLVMLAIYFIIFLLLAFGIF.

The protein resides in the cell membrane. This is an uncharacterized protein from Bacillus subtilis (strain 168).